Reading from the N-terminus, the 260-residue chain is Proteasome subunit alpha (260 aa).

This sequence belongs to the peptidase T1A family. As to quaternary structure, the 20S proteasome core is composed of 14 alpha and 14 beta subunits that assemble into four stacked heptameric rings, resulting in a barrel-shaped structure. The two inner rings, each composed of seven catalytic beta subunits, are sandwiched by two outer rings, each composed of seven alpha subunits. The catalytic chamber with the active sites is on the inside of the barrel. Has a gated structure, the ends of the cylinder being occluded by the N-termini of the alpha-subunits. Is capped at one or both ends by the proteasome regulatory ATPase, PAN.

The protein resides in the cytoplasm. The formation of the proteasomal ATPase PAN-20S proteasome complex, via the docking of the C-termini of PAN into the intersubunit pockets in the alpha-rings, triggers opening of the gate for substrate entry. Interconversion between the open-gate and close-gate conformations leads to a dynamic regulation of the 20S proteasome proteolysis activity. In terms of biological role, component of the proteasome core, a large protease complex with broad specificity involved in protein degradation. This is Proteasome subunit alpha from Thermococcus kodakarensis (strain ATCC BAA-918 / JCM 12380 / KOD1) (Pyrococcus kodakaraensis (strain KOD1)).